The sequence spans 337 residues: BRI1 kinase inhibitor 1 (337 aa).

Over residues Met-1–Ala-25 the composition is skewed to polar residues. Disordered regions lie at residues Met-1 to Ser-38 and Ser-51 to Gln-72. A compositionally biased stretch (low complexity) spans Ser-26 to Ser-38. Tyr-211 is modified (phosphotyrosine). The interval Ser-270–Glu-310 is disordered. Residues Ser-288 to Glu-310 show a composition bias toward low complexity.

As to quaternary structure, interacts (via C-terminus) with BRI1 (via kinase domain). Phosphorylated on Tyr-211 in response to brassinosteroid perception, leading to its inactivation: once phosphorylated, displaced into the cytosol where it is inactive. As to expression, expressed in leaves, petioles, shoot apices, hypocotyls, roots and flowers.

The protein resides in the cell membrane. The protein localises to the cytoplasm. Negative regulator of brassinosteroid signaling. When associated to the membrane, limits the interaction of BRI1 with BAK1 by binding to the kinase-inactive form of BRI1. The sequence is that of BRI1 kinase inhibitor 1 (BKI1) from Arabidopsis thaliana (Mouse-ear cress).